A 76-amino-acid chain; its full sequence is Vasotab (76 aa).

The signal sequence occupies residues 1 to 20; sequence MKFALFSVLVVLLIATFVAA. The Kazal-like domain maps to 21–76; the sequence is DECPRICTADYRPVCGTPSGGRRSANRTFGNQCSLNAHNCLNKGDTYDKLHDGECK. Cystine bridges form between Cys23/Cys60, Cys27/Cys53, and Cys35/Cys75.

As to expression, expressed by the salivary gland.

It localises to the secreted. Functionally, vasodilator protein that inhibits vasoconstriction of isolated rat femoral artery induced by phenylephrine. Since platelet aggregation and vasoconstriction are key hemostatic responses, particularly in small wounds, this protein likely participates in the antihemostatic responses during blood feeding. Blocks L-type calcium channels (Cav1/CACNA1) in left ventricular myocytes isolated from rat hearts. In Hybomitra bimaculata (Horse fly), this protein is Vasotab.